Consider the following 494-residue polypeptide: Glutamate--tRNA ligase (494 aa).

Positions 15–25 (PSPTGNPHVGL) match the 'HIGH' region motif. Cys112, Cys114, Cys139, and Glu141 together coordinate Zn(2+). A 'KMSKS' region motif is present at residues 260 to 264 (KLSKR). Lys263 serves as a coordination point for ATP.

Belongs to the class-I aminoacyl-tRNA synthetase family. Glutamate--tRNA ligase type 1 subfamily. In terms of assembly, monomer. Requires Zn(2+) as cofactor.

The protein resides in the cytoplasm. The enzyme catalyses tRNA(Glu) + L-glutamate + ATP = L-glutamyl-tRNA(Glu) + AMP + diphosphate. Catalyzes the attachment of glutamate to tRNA(Glu) in a two-step reaction: glutamate is first activated by ATP to form Glu-AMP and then transferred to the acceptor end of tRNA(Glu). This is Glutamate--tRNA ligase from Streptomyces coelicolor (strain ATCC BAA-471 / A3(2) / M145).